We begin with the raw amino-acid sequence, 416 residues long: Adenylosuccinate synthetase (416 aa).

GTP is bound by residues 13-19 (GDEGKGK) and 41-43 (GHT). The Proton acceptor role is filled by D14. Residues D14 and G41 each coordinate Mg(2+). IMP-binding positions include 14-17 (DEGK), 39-42 (NAGH), T126, R140, Q220, T235, and R299. Catalysis depends on H42, which acts as the Proton donor. 295–301 (VSTGRKR) contributes to the substrate binding site. GTP-binding positions include R301, 327–329 (KLD), and 405–407 (STS).

This sequence belongs to the adenylosuccinate synthetase family. In terms of assembly, homodimer. It depends on Mg(2+) as a cofactor.

The protein localises to the cytoplasm. It catalyses the reaction IMP + L-aspartate + GTP = N(6)-(1,2-dicarboxyethyl)-AMP + GDP + phosphate + 2 H(+). It functions in the pathway purine metabolism; AMP biosynthesis via de novo pathway; AMP from IMP: step 1/2. Its function is as follows. Plays an important role in the de novo pathway of purine nucleotide biosynthesis. Catalyzes the first committed step in the biosynthesis of AMP from IMP. The chain is Adenylosuccinate synthetase from Campylobacter lari (strain RM2100 / D67 / ATCC BAA-1060).